A 238-amino-acid polypeptide reads, in one-letter code: Ditrans,polycis-undecaprenyl-diphosphate synthase ((2E,6E)-farnesyl-diphosphate specific) (238 aa).

D14 is a catalytic residue. D14 is a Mg(2+) binding site. Residues 15–18 (GNGR), W19, R27, H31, and 59–61 (SSE) contribute to the substrate site. N62 functions as the Proton acceptor in the catalytic mechanism. Substrate contacts are provided by residues W63, R65, R182, and 188-190 (RIS). E201 contacts Mg(2+).

It belongs to the UPP synthase family. As to quaternary structure, homodimer. The cofactor is Mg(2+).

The catalysed reaction is 8 isopentenyl diphosphate + (2E,6E)-farnesyl diphosphate = di-trans,octa-cis-undecaprenyl diphosphate + 8 diphosphate. Its function is as follows. Catalyzes the sequential condensation of isopentenyl diphosphate (IPP) with (2E,6E)-farnesyl diphosphate (E,E-FPP) to yield (2Z,6Z,10Z,14Z,18Z,22Z,26Z,30Z,34E,38E)-undecaprenyl diphosphate (di-trans,octa-cis-UPP). UPP is the precursor of glycosyl carrier lipid in the biosynthesis of bacterial cell wall polysaccharide components such as peptidoglycan and lipopolysaccharide. In Legionella pneumophila (strain Paris), this protein is Ditrans,polycis-undecaprenyl-diphosphate synthase ((2E,6E)-farnesyl-diphosphate specific).